The sequence spans 174 residues: Ribosome maturation factor RimP (174 aa).

It belongs to the RimP family.

The protein localises to the cytoplasm. Functionally, required for maturation of 30S ribosomal subunits. This is Ribosome maturation factor RimP from Acinetobacter baylyi (strain ATCC 33305 / BD413 / ADP1).